An 84-amino-acid polypeptide reads, in one-letter code: MERSNRKTRIGRVVSDKMEKTIVVAVEGKVRHPLYGKTINRSKKFKVHDENNEARINDRVLIMETRPLSKDKRWRLVQIVEKAK.

It belongs to the universal ribosomal protein uS17 family. Part of the 30S ribosomal subunit.

In terms of biological role, one of the primary rRNA binding proteins, it binds specifically to the 5'-end of 16S ribosomal RNA. The sequence is that of Small ribosomal subunit protein uS17 from Clostridium novyi (strain NT).